The primary structure comprises 410 residues: Peptidase T (410 aa).

Histidine 78 contacts Zn(2+). Aspartate 80 is a catalytic residue. Aspartate 140 is a binding site for Zn(2+). Glutamate 174 serves as the catalytic Proton acceptor. 3 residues coordinate Zn(2+): glutamate 175, aspartate 197, and histidine 379.

The protein belongs to the peptidase M20B family. Requires Zn(2+) as cofactor.

The protein resides in the cytoplasm. It catalyses the reaction Release of the N-terminal residue from a tripeptide.. Functionally, cleaves the N-terminal amino acid of tripeptides. This is Peptidase T from Staphylococcus saprophyticus subsp. saprophyticus (strain ATCC 15305 / DSM 20229 / NCIMB 8711 / NCTC 7292 / S-41).